We begin with the raw amino-acid sequence, 889 residues long: MLTKEDFRNKYQYHQATPMLQQYLDIKFTHQCCILLFRVGDFYELFFDDAIVVSKLLGLILAKKGKHAGQDLPMCGIPYHALESYLPRLVEQEHKVALCEQLESPEEAKKRNGYKAVVKREVVRIITSGTITEESLIKANVPNYLAAIVIHKDIASIGYCDVSTAEFIVIDVAIHNLTSELSRINPKEIILSESLQHNSGLLALFDNYKQKIVYQVESYFSFNKAQRVIQNYYEIITIDSIGSLNSTQVSAVGAILEYLSIMQKHSKSKLPFPQIVSYENFMLIDASARKNLELTSTLSGNFKGSLLSIIDATVTNQGGRLLHKFLSTPLAEVNLINSRLQITDFFYQNLQLVENLRQLVKLVPDIERALSRILIAKALPKDLESIKISLKIALSIKKELNKVLEEGNTPKYLEEIYNPLFGDNELYELLDSALLDDLSNSANDCGFIKSSYSTKLEELRNLIHNSSNFIEQLKLQYRQETCIETLKICHNNVWGMFIEVSSKNAHKITDSKFVHKQTTTTAVRFTTTELQTLEAKMLNAKTMAAALEQEILAELCKAISLKSEKLSHLAKSISLIDVFCNFAYISHEYNYCRPEITSDLAFNIVDGRHAVIEKLITKKHESFISNDCNLQNDQRIWLITGPNMAGKSTFLRQNAIIVILAQIGCYVPAQSAQIGVVDKLFSRIGAADDLASGQSTFMVEMVETSVILAQSTFMSLVILDEIGRGTSTYDGISIAWSCLEYIHSNIRCRCLFATHYHELVDLASKLLSLKNFTVKIHDSNDKLSFLYKIIEGAANKSYGIHVAELAGLPRIVLNRAKEILLELEHNKVNINQSNNNITKSIDIAVPPYPVKTIEIIKQLNPDQLTPKEALSIIYKIKNTILLEEDEKMI.

Gly641–Ser648 provides a ligand contact to ATP.

This sequence belongs to the DNA mismatch repair MutS family.

In terms of biological role, this protein is involved in the repair of mismatches in DNA. It is possible that it carries out the mismatch recognition step. This protein has a weak ATPase activity. This is DNA mismatch repair protein MutS from Orientia tsutsugamushi (strain Boryong) (Rickettsia tsutsugamushi).